A 93-amino-acid chain; its full sequence is Protein VNG_0358C (93 aa).

The protein is Protein VNG_0358C of Halobacterium salinarum (strain ATCC 700922 / JCM 11081 / NRC-1) (Halobacterium halobium).